Here is a 130-residue protein sequence, read N- to C-terminus: Small ribosomal subunit protein uS9 (130 aa).

A disordered region spans residues 108 to 130 (SREVERKKVGLRKARKRPQYSKR). A compositionally biased stretch (basic residues) spans 116–130 (VGLRKARKRPQYSKR).

This sequence belongs to the universal ribosomal protein uS9 family.

This is Small ribosomal subunit protein uS9 from Cellvibrio japonicus (strain Ueda107) (Pseudomonas fluorescens subsp. cellulosa).